Here is an 83-residue protein sequence, read N- to C-terminus: Cell division topological specificity factor (83 aa).

This sequence belongs to the MinE family.

Prevents the cell division inhibition by proteins MinC and MinD at internal division sites while permitting inhibition at polar sites. This ensures cell division at the proper site by restricting the formation of a division septum at the midpoint of the long axis of the cell. In Pseudoalteromonas atlantica (strain T6c / ATCC BAA-1087), this protein is Cell division topological specificity factor.